A 785-amino-acid chain; its full sequence is Hypha-specific G1 cyclin-related protein 1 (785 aa).

The interval 1–42 (MINITKPLTPKSISQQKQQQQHPYKNISTTKSNNNPQASGSK) is disordered. Residues 22–42 (HPYKNISTTKSNNNPQASGSK) are compositionally biased toward polar residues. The Cyclin N-terminal domain maps to 71 to 238 (DIYDIMVNLI…VLNTLEWSLN (168 aa)). Disordered regions lie at residues 408-433 (TTTTTTTTSDNISTTPTSSTGSTTPV), 447-679 (VSST…SKFN), and 750-774 (NNSGNGKGNGNGGSGTPISENDSPI). 2 stretches are compositionally biased toward low complexity: residues 447-473 (VSSTSSVASSSNANTPSSSCSTTSTTP) and 484-512 (NYSNYSNYSNYSNSSTSLGLTNNNNNNTT). Residues 513–535 (ISPVDSTTINSHTKNSSQLNYQY) are compositionally biased toward polar residues. The segment covering 579-613 (NSANKNSNKSNSANNNNTTTIATTTTTTTNNNNNS) has biased composition (low complexity). Positions 621–631 (LSYNNYFNSPN) are enriched in polar residues. Residues 646–679 (QQQQQNQGQNQQQPLQLYQGDNNNNGTNTNSKFN) show a composition bias toward low complexity. Residues 754-764 (NGKGNGNGGSG) are compositionally biased toward gly residues. The span at 765–774 (TPISENDSPI) shows a compositional bias: polar residues.

This sequence belongs to the cyclin family. Interacts with CDC28.

Functionally, hypha-specific G1 cyclin-related protein involved in regulation of morphogenesis and opaque cells filamentous growth, and required for both conventional and pheromone-stimulated biofilm formation. Required to maintain hyphal tip localization of actin and SPA2. Regulates the CDC28 kinase during hyphal growth. The CDC28-HGC1 complex phosphorylates and prevents RGA2 from localizing to hyphal tips, leading to localized CDC42 activation for hyphal extension. The CDC28-HGC1 complex also phosphorylates SEC2 and maintains CDC11 phosphorylation throughout hyphal growth. Moreover CDC28-HGC1 phosphorylation of EFG1 represses cell separation genes during hyphal growth. Also partially controls SEP7 phosphorylation status and subsequent septin ring dynamics. Required for virulence and especially mediates dynamic adhesion to endothelium of blood vessels during circulation. The protein is Hypha-specific G1 cyclin-related protein 1 (HGC1) of Candida albicans (strain SC5314 / ATCC MYA-2876) (Yeast).